Reading from the N-terminus, the 82-residue chain is Small ribosomal subunit protein bS16 (82 aa).

The protein belongs to the bacterial ribosomal protein bS16 family.

This chain is Small ribosomal subunit protein bS16, found in Salmonella agona (strain SL483).